A 392-amino-acid polypeptide reads, in one-letter code: DNA replication and repair protein RecF (392 aa).

Residue 30–37 (GRNGFGKT) coordinates ATP.

It belongs to the RecF family.

Its subcellular location is the cytoplasm. In terms of biological role, the RecF protein is involved in DNA metabolism; it is required for DNA replication and normal SOS inducibility. RecF binds preferentially to single-stranded, linear DNA. It also seems to bind ATP. This Corynebacterium aurimucosum (strain ATCC 700975 / DSM 44827 / CIP 107346 / CN-1) (Corynebacterium nigricans) protein is DNA replication and repair protein RecF.